The following is a 659-amino-acid chain: Zinc finger protein 304 (659 aa).

The 75-residue stretch at 14–88 (VTFEDVFVYF…TAESGLFQKA (75 aa)) folds into the KRAB domain. C2H2-type zinc fingers lie at residues 89–111 (HPCE…QGSH), 115–139 (KLCT…QKQH), 251–273 (FRCL…RKIH), 279–301 (HVCK…QKFH), 307–329 (YTCS…QRVH), 335–357 (YDCS…QRIH), 363–385 (YKCN…QRFH), 391–413 (YECS…WRIH), 419–441 (YECI…RRVH), 447–469 (YVCS…QIIH), 475–497 (YECS…QKIH), 503–525 (YECG…QRIH), 531–553 (YECN…QRVH), 559–581 (YVCS…KKVH), 587–609 (YECS…QRVH), and 615–637 (YVCS…QKAH).

This sequence belongs to the krueppel C2H2-type zinc-finger protein family. In terms of assembly, probably part of a corepressor complex containing ZNF304, TRIM28, SETDB1 and DNMT1; leading to promoter hypermethylation and transcriptional silencing. Probably associates with Polycomb group (PcG) complexes; leading to trimethylation of 'Lys-27' of histone H3 (H3K27me3). Interacts with USP28. Deubiquitinated by USP28; the deubiquitination leads to the stabilization of ZNF304 from proteolytic degradation. Expressed in undifferentiated embryonic stem cells (ESCs). Expressed strongly in colorectal cancers cells (CRCs). Expressed strongly in ovarian carcinoma (OC) tumor cell lines compared to non-transformed ovarian epithelial cells (at protein level). Expressed in lymphoid tissues, thyroid, adrenal gland, prostate, pancreas and skeletal muscles.

It localises to the nucleus. Acts as a transcriptional regulator and plays a role in gene silencing. Probably forms a corepressor complex required for activated KRAS-mediated promoter hypermethylation and transcriptional silencing of several tumor suppressor genes (TSGs) or other tumor-related genes in colorectal cancer (CRC) cells. Also required to maintain a transcriptionally repressive state of genes in undifferentiated embryonic stem cells (ESCs) by inducing trimethylation of 'Lys-27' of histone H3 (H3K27me3) in a Polycomb group (PcG) complexes-dependent manner. Associates at promoter regions of TSGs and mediates the recruitment of the corepressor complex containing the scaffolding protein TRIM28, methyltransferase DNMT1 and histone methyltransferase SETDB1 and/or the PcG complexes at those sites. Transcription factor involved in the metastatic cascade process by inducing cell migration and proliferation and gain resistance to anoikis of ovarian carcinoma (OC) cells via integrin-mediated signaling pathways. Associates with the ITGB1 promoter and positively regulates beta-1 integrin transcription expression. Promotes angiogenesis. Promotes tumor growth. This is Zinc finger protein 304 from Homo sapiens (Human).